A 345-amino-acid chain; its full sequence is Biotin synthase (345 aa).

Positions 67–295 constitute a Radical SAM core domain; it reads YKVQLASLLS…KSRIRLSAGR (229 aa). [4Fe-4S] cluster contacts are provided by C82, C86, and C89. 4 residues coordinate [2Fe-2S] cluster: C126, C158, C218, and R290.

The protein belongs to the radical SAM superfamily. Biotin synthase family. As to quaternary structure, homodimer. [4Fe-4S] cluster serves as cofactor. [2Fe-2S] cluster is required as a cofactor.

It carries out the reaction (4R,5S)-dethiobiotin + (sulfur carrier)-SH + 2 reduced [2Fe-2S]-[ferredoxin] + 2 S-adenosyl-L-methionine = (sulfur carrier)-H + biotin + 2 5'-deoxyadenosine + 2 L-methionine + 2 oxidized [2Fe-2S]-[ferredoxin]. Its pathway is cofactor biosynthesis; biotin biosynthesis; biotin from 7,8-diaminononanoate: step 2/2. Catalyzes the conversion of dethiobiotin (DTB) to biotin by the insertion of a sulfur atom into dethiobiotin via a radical-based mechanism. This chain is Biotin synthase, found in Prochlorococcus marinus (strain NATL2A).